Consider the following 1120-residue polypeptide: MEANDSPHDVAVVGMGCRLPGNNNTPEELWRSILQKVDASSEIPRMRWEPYQQNAQNARSIGKVPRRGYFVKNLENFDAGFFNISPKEAEQMDPQQRLVLEVTWEALENAGIPLSSLSGSDAAVFMGVNSDDYGKLLLEDLPHVEPWMGIGTAYCGVANRISYHLNLMGPSTAVDAACASSLVAIHLGRQAILSGESKVAIVGGVNAIFGPGLTSVLDKAGALSSDGRCHSFDDAASGYGRGEGAAVVILKNMAEAVKDGDHILATLKGTAVAQDGRTNGIMAPNQKAQELVARKALDVARVDASTIDYVEAHATSTPVGDPTEVSAISAVYGKGRSPDKPCYIGSVKPNVGHLEAGAGAVGFIKAVMSVQKGILPPQANLKTLNTRVNWSEGVQVVQDIEDWPSSGYPRRAGVCSYGYGGTVSHAIIEKYIQTGPAIYSKEQWPKGTQVLLLSSPQRRSLETQAATQAEWMSTVGKQNDLRCVAATLGTRRSHHKYRAAFVVESHDDAAEKLNAFACQTPTKWTTSGGKPEGDDRPVVWVFSGHGAQWTDMAKDLLQYRVFRDVIESVDILVQKEMGFSAIQAMEMGVLNGSDQVQVLTYLMQIGLSEVLRSLGVSCGAVIGHSVGEIAASVAAGCITPAEGTLIVTRRAKLYRRFMGAGGMALVCAPLEQITIEISTQNVNNLVVAINSSPSSCVVSGPKEEIEAFALNLNNKGIKTIHVDTDIAFHHPMLGELMEPLAEALVGYVSPSQSKVAIYSTSASDPRSTMDRGIRYWLDNMVNPVQLTSAISAAAEDASPLAPIIKKILSMESRGATIQAIAIDISSHDAASQLSSRIDDLCFPPIRGVVHAAGVLHNEHVLSVTPDSFERVLAPKIAGSLTLNMLFPPKTVDFMVLFSSCGQFFGFPGQASYASGNAFLDALATYRRSQGDNTIAMQWTSWREIGMAAGSEFVRAELATKGITDISQEEAFQAWMHVSKYDVDHAVVLRSRALEKHEPLPSPLLVDIAIHKISSILTPPPTPPLSASSDLLPLPRNPADRFDSLSRQVRECVANVLQMETDEVASQEPLSNMGMDSVMTVHLRGRLQKSLGVLVPPNLTWSHPSIDHIVKWLMEKTNDKE.

Residues 7 to 430 (PHDVAVVGMG…GTVSHAIIEK (424 aa)) form the Ketosynthase family 3 (KS3) domain. Catalysis depends on for beta-ketoacyl synthase activity residues Cys178, His313, and His353. The segment at 539 to 796 (VWVFSGHGAQ…TSAISAAAED (258 aa)) is malonyl-CoA:ACP transacylase (MAT) domain. Catalysis depends on Ser625, which acts as the For acyl/malonyl transferase activity. The tract at residues 804–943 (IKKILSMESR…IAMQWTSWRE (140 aa)) is ketoreductase (KR) domain. One can recognise a Carrier domain in the interval 1042-1116 (DSLSRQVREC…HIVKWLMEKT (75 aa)). At Ser1076 the chain carries O-(pantetheine 4'-phosphoryl)serine.

Functionally, polyketide synthase; part of the gene cluster 41 that mediates the biosynthesis of an extracellular and diffusible metabolite that is able to stimulate colony sclerotial production. This chain is Cluster 41 polyketide synthase, found in Aspergillus flavus (strain ATCC 200026 / FGSC A1120 / IAM 13836 / NRRL 3357 / JCM 12722 / SRRC 167).